The following is an 84-amino-acid chain: Small ribosomal subunit protein uS17 (84 aa).

The protein belongs to the universal ribosomal protein uS17 family. In terms of assembly, part of the 30S ribosomal subunit.

Its function is as follows. One of the primary rRNA binding proteins, it binds specifically to the 5'-end of 16S ribosomal RNA. The polypeptide is Small ribosomal subunit protein uS17 (Ureaplasma parvum serovar 3 (strain ATCC 27815 / 27 / NCTC 11736)).